A 247-amino-acid polypeptide reads, in one-letter code: PF03932 family protein CutC (247 aa).

It belongs to the CutC family.

Its subcellular location is the cytoplasm. The protein is PF03932 family protein CutC of Klebsiella pneumoniae subsp. pneumoniae (strain ATCC 700721 / MGH 78578).